Reading from the N-terminus, the 1250-residue chain is Bifunctional autolysin (1250 aa).

An N-terminal signal peptide occupies residues 1 to 29 (MAKKFNYKLPSMVALTLVGSAVTAHQVQA). The segment covering 103–138 (GDTRANQSATTNNTQPVAKSTSTTAPKTNTNVTNAG) has biased composition (polar residues). Disordered regions lie at residues 103–151 (GDTR…NSEN) and 173–219 (AAAP…KYKP). Positions 173-196 (AAAPKAATTSAPKAKTEATPKVTT) are enriched in low complexity. Residues 199-769 (ASAQPRSVAA…AVAQPKTAVK (571 aa)) form an N-acetylmuramoyl-L-alanine amidase region. GW domains follow at residues 437–511 (TVAA…YNTA), 513–587 (SPVN…DTAK), 606–680 (TVSS…YNNA), 682–756 (SPVN…VPAA), 778–853 (TTQT…VQNL), 855–930 (KEVK…APTA), and 937–1011 (AAKD…KELI). Residues 770-1250 (AYTVTKPQTT…GKYFDIPQYK (481 aa)) are endo-beta-N-acetylglucosaminidase.

In the N-terminal section; belongs to the N-acetylmuramoyl-L-alanine amidase 2 family. It in the C-terminal section; belongs to the glycosyl hydrolase 73 family. Oligomer; forms a ring structure at the cell surface which is important for efficient partitioning of daughter cells after cell division. Undergoes proteolytic processing to generate the two extracellular lytic enzymes, probably at the septal region on the cell surface.

Its subcellular location is the secreted. The catalysed reaction is Hydrolyzes the link between N-acetylmuramoyl residues and L-amino acid residues in certain cell-wall glycopeptides.. It catalyses the reaction an N(4)-(oligosaccharide-(1-&gt;3)-[oligosaccharide-(1-&gt;6)]-beta-D-Man-(1-&gt;4)-beta-D-GlcNAc-(1-&gt;4)-alpha-D-GlcNAc)-L-asparaginyl-[protein] + H2O = an oligosaccharide-(1-&gt;3)-[oligosaccharide-(1-&gt;6)]-beta-D-Man-(1-&gt;4)-D-GlcNAc + N(4)-(N-acetyl-beta-D-glucosaminyl)-L-asparaginyl-[protein]. In terms of biological role, endohydrolysis of the di-N-acetylchitobiosyl unit in high-mannose glycopeptides and glycoproteins containing the -[(Man)5(GlcNAc)2]-Asn structure. One N-acetyl-D-glucosamine residue remains attached to the protein; the rest of the oligosaccharide is released intact. Cleaves the peptidoglycan connecting the daughter cells at the end of the cell division cycle, resulting in the separation of the two newly divided cells. Acts as an autolysin in penicillin-induced lysis. The polypeptide is Bifunctional autolysin (atl) (Staphylococcus aureus (strain MSSA476)).